Consider the following 507-residue polypeptide: Putative UDP-glucuronosyltransferase ugt-60 (507 aa).

A signal peptide spans 1-15 (MYLPIFCIFLSVVDS). Asparagine 312 carries N-linked (GlcNAc...) asparagine glycosylation. A helical transmembrane segment spans residues 379–399 (YNSFLEAAQAGIPAVLMPLFA).

Belongs to the UDP-glycosyltransferase family.

It is found in the membrane. The enzyme catalyses glucuronate acceptor + UDP-alpha-D-glucuronate = acceptor beta-D-glucuronoside + UDP + H(+). In Caenorhabditis elegans, this protein is Putative UDP-glucuronosyltransferase ugt-60 (ugt-60).